A 161-amino-acid polypeptide reads, in one-letter code: Phosphopantetheine adenylyltransferase (161 aa).

Ser11 contacts substrate. Residues 11–12 (SF) and His19 contribute to the ATP site. Residues Lys43, Leu75, and Arg89 each coordinate substrate. Residues 90–92 (GLR), Glu100, and 125–131 (YSFISSS) contribute to the ATP site.

It belongs to the bacterial CoaD family. In terms of assembly, homohexamer. Requires Mg(2+) as cofactor.

The protein localises to the cytoplasm. The enzyme catalyses (R)-4'-phosphopantetheine + ATP + H(+) = 3'-dephospho-CoA + diphosphate. It functions in the pathway cofactor biosynthesis; coenzyme A biosynthesis; CoA from (R)-pantothenate: step 4/5. Reversibly transfers an adenylyl group from ATP to 4'-phosphopantetheine, yielding dephospho-CoA (dPCoA) and pyrophosphate. This chain is Phosphopantetheine adenylyltransferase, found in Staphylococcus carnosus (strain TM300).